The following is a 657-amino-acid chain: SAGA complex subunit SGF73 (657 aa).

Positions 78, 81, 93, and 98 each coordinate Zn(2+). Disordered stretches follow at residues 98–225 (CAGA…TEKH), 287–353 (EKRA…VNLT), 469–532 (QQQQ…SQDT), and 572–636 (ESNQ…NVSG). A compositionally biased stretch (basic and acidic residues) spans 107–118 (TDPRDESTRETI). The span at 131-163 (DDDNSNDNNNDDDDDDDNDDNEDDDDADDDDDN) shows a compositional bias: acidic residues. Polar residues-rich tracts occupy residues 174–193 (SSFN…TPNM) and 200–210 (TGTPQTFSSSI). The 67-residue stretch at 220–286 (NPTEKHLIDF…EHQTKIGAAA (67 aa)) folds into the SCA7 domain. Residues 306 to 321 (QKKHTQQQKQGQRSKQ) are compositionally biased toward basic residues. Composition is skewed to low complexity over residues 325 to 336 (NGGKSAKNGGKS) and 469 to 493 (QQQQ…QPTQ). Polar residues predominate over residues 504-516 (ATNSSFNANVSSK). Residues 517 to 526 (QIQQQQQQQQ) are compositionally biased toward low complexity. Residues 572–583 (ESNQDSHLSGTH) show a composition bias toward polar residues. Low complexity predominate over residues 584-594 (NNNSSKNGNNN). The span at 600–636 (ASISSPNTSVNSIQSPPSVNSVNGSGQGVSTGINVSG) shows a compositional bias: polar residues.

It belongs to the ataxin-7 family. In terms of assembly, component of the 1.8 MDa SAGA (Spt-Ada-Gcn5 acetyltransferase) complex, which is composed of 19 subunits TRA1, SPT7, TAF5, NGG1/ADA3, SGF73, SPT20/ADA5, SPT8, TAF12, TAF6, HFI1/ADA1, UBP8, GCN5, ADA2, SPT3, SGF29, TAF10, TAF9, SGF11 and SUS1. The SAGA complex is composed of 4 modules, namely the HAT (histone acetyltransferase) module (GCN5, ADA2, NGG1/ADA3 and SGF29), the DUB (deubiquitinating) module (UBP8, SGF11, SGF73 and SUS1), the core or TAF (TBP-associated factor) module (TAF5, TAF6, TAF9, TAF10 and TAF12), and the Tra1 or SPT (Suppressor of Ty) module (TRA1, HFI1/ADA1, SPT3, SPT7, SPT8 and SPT20/ADA5). The Tra1/SPT module binds activators, the core module recruits TBP (TATA-binding protein), the HAT module contains the histone H3 acetyltransferase GCN5, and the DUB module comprises the histone H2B deubiquitinase UBP8. Also identified in an altered form of SAGA, named SALSA (SAGA altered, Spt8 absent) or SLIK (SAGA-like) complex, which contains a C-terminal truncated form of SPT7 and is missing SPT8. However, it has been shown that the SAGA and SAGA-like SALSA/SLIK transcriptional coactivators are structurally and biochemically equivalent.

Its subcellular location is the nucleus. It localises to the cytoplasm. Functionally, component of the transcription coactivator SAGA complex. SAGA acts as a general cofactor required for essentially all RNA polymerase II transcription. At the promoters, SAGA is required for transcription pre-initiation complex (PIC) recruitment. It influences RNA polymerase II transcriptional activity through different activities such as TBP interaction (via core/TAF module) and promoter selectivity, interaction with transcription activators (via Tra1/SPT module), and chromatin modification through histone acetylation (via HAT module) and deubiquitination (via DUB module). SAGA preferentially acetylates histones H3 (to form H3K9ac, H3K14ac, H3K18ac and H3K23ac) and H2B and deubiquitinates histone H2B. SAGA interacts with DNA via upstream activating sequences (UASs). Also identified in a modified version of SAGA named SALSA or SLIK. The cleavage of SPT7 and the absence of the SPT8 subunit in SLIK neither drive any major conformational differences in its structure compared with SAGA, nor significantly affect HAT, DUB, or DNA-binding activities. SGF73 tethers the DUB module to the rest of the SAGA complex through its central domain and activates the ubiquitin hydrolase UBP8 by maintaining its catalytic domain in an active conformation. SGF73 mediates recruitment of the TREX-2 mRNA export factors SAC3 and THP1 to SAGA, which is crucial to target TREX-2 to the nuclear pore complex (NPC) necessary for export of mRNA. Upon environmental stress, involved in the bypass of the canonical mRNA export process for the immediate export of stress-related transcripts to maintain proteostasis. The polypeptide is SAGA complex subunit SGF73 (SGF73) (Saccharomyces cerevisiae (strain ATCC 204508 / S288c) (Baker's yeast)).